A 408-amino-acid polypeptide reads, in one-letter code: 1-deoxy-D-xylulose 5-phosphate reductoisomerase (408 aa).

Thr-19, Gly-20, Ser-21, Ile-22, Gly-45, Asn-47, and Asn-130 together coordinate NADPH. Lys-131 is a 1-deoxy-D-xylulose 5-phosphate binding site. Residue Glu-132 participates in NADPH binding. Residue Asp-156 coordinates Mn(2+). Residues Ser-157, Glu-158, Ser-182, and His-205 each contribute to the 1-deoxy-D-xylulose 5-phosphate site. Glu-158 contacts Mn(2+). Gly-211 is a binding site for NADPH. Residues Ser-218, Asn-223, Lys-224, and Glu-227 each coordinate 1-deoxy-D-xylulose 5-phosphate. Residue Glu-227 participates in Mn(2+) binding.

This sequence belongs to the DXR family. The cofactor is Mg(2+). Requires Mn(2+) as cofactor.

It carries out the reaction 2-C-methyl-D-erythritol 4-phosphate + NADP(+) = 1-deoxy-D-xylulose 5-phosphate + NADPH + H(+). It participates in isoprenoid biosynthesis; isopentenyl diphosphate biosynthesis via DXP pathway; isopentenyl diphosphate from 1-deoxy-D-xylulose 5-phosphate: step 1/6. Its function is as follows. Catalyzes the NADPH-dependent rearrangement and reduction of 1-deoxy-D-xylulose-5-phosphate (DXP) to 2-C-methyl-D-erythritol 4-phosphate (MEP). This is 1-deoxy-D-xylulose 5-phosphate reductoisomerase from Gluconobacter oxydans (strain 621H) (Gluconobacter suboxydans).